We begin with the raw amino-acid sequence, 672 residues long: uncharacterized protein (672 aa).

An N-terminal signal peptide occupies residues 1 to 24 (MKTLKTLKIFIIICIASVSLASFA). The next 6 membrane-spanning stretches (helical) occupy residues 226 to 246 (IIGA…ALNK), 254 to 274 (IALF…LGPL), 410 to 430 (IILA…LYFI), 436 to 456 (CMIT…MALF), 469 to 489 (VCIS…LLIT), and 562 to 582 (VVSI…FYYF). Residues 626–672 (ASQGKPSVGDKPDVGGKRKEGEQQGGDSESGAGGGLADLASGSGGGK) are disordered. Positions 633–647 (VGDKPDVGGKRKEGE) are enriched in basic and acidic residues. Positions 656–672 (GAGGGLADLASGSGGGK) are enriched in gly residues.

This sequence belongs to the TrbL/VirB6 family.

The protein resides in the cell membrane. This is an uncharacterized protein from Rickettsia felis (strain ATCC VR-1525 / URRWXCal2) (Rickettsia azadi).